The following is a 424-amino-acid chain: Serine--tRNA ligase (424 aa).

Thr231 to Glu233 contributes to the L-serine binding site. Arg262 to Glu264 contacts ATP. Glu285 is an L-serine binding site. Position 349–352 (Glu349–Ser352) interacts with ATP. Residue Ser385 participates in L-serine binding.

Belongs to the class-II aminoacyl-tRNA synthetase family. Type-1 seryl-tRNA synthetase subfamily. As to quaternary structure, homodimer. The tRNA molecule binds across the dimer.

Its subcellular location is the cytoplasm. It catalyses the reaction tRNA(Ser) + L-serine + ATP = L-seryl-tRNA(Ser) + AMP + diphosphate + H(+). The enzyme catalyses tRNA(Sec) + L-serine + ATP = L-seryl-tRNA(Sec) + AMP + diphosphate + H(+). It functions in the pathway aminoacyl-tRNA biosynthesis; selenocysteinyl-tRNA(Sec) biosynthesis; L-seryl-tRNA(Sec) from L-serine and tRNA(Sec): step 1/1. In terms of biological role, catalyzes the attachment of serine to tRNA(Ser). Is also able to aminoacylate tRNA(Sec) with serine, to form the misacylated tRNA L-seryl-tRNA(Sec), which will be further converted into selenocysteinyl-tRNA(Sec). The sequence is that of Serine--tRNA ligase from Bacillus cytotoxicus (strain DSM 22905 / CIP 110041 / 391-98 / NVH 391-98).